Reading from the N-terminus, the 475-residue chain is Glutamyl-tRNA(Gln) amidotransferase subunit A (475 aa).

Active-site charge relay system residues include lysine 69 and serine 144. Serine 168 (acyl-ester intermediate) is an active-site residue.

This sequence belongs to the amidase family. GatA subfamily. As to quaternary structure, heterotrimer of A, B and C subunits.

It catalyses the reaction L-glutamyl-tRNA(Gln) + L-glutamine + ATP + H2O = L-glutaminyl-tRNA(Gln) + L-glutamate + ADP + phosphate + H(+). Allows the formation of correctly charged Gln-tRNA(Gln) through the transamidation of misacylated Glu-tRNA(Gln) in organisms which lack glutaminyl-tRNA synthetase. The reaction takes place in the presence of glutamine and ATP through an activated gamma-phospho-Glu-tRNA(Gln). This Methanococcoides burtonii (strain DSM 6242 / NBRC 107633 / OCM 468 / ACE-M) protein is Glutamyl-tRNA(Gln) amidotransferase subunit A.